The chain runs to 704 residues: Elongation factor G (704 aa).

Residues 10-286 (KKVRNIGIMA…AVIDFLPNPM (277 aa)) form the tr-type G domain. GTP contacts are provided by residues 19 to 26 (AHIDAGKT), 83 to 87 (DTPGH), and 137 to 140 (NKMD).

Belongs to the TRAFAC class translation factor GTPase superfamily. Classic translation factor GTPase family. EF-G/EF-2 subfamily.

The protein resides in the cytoplasm. Catalyzes the GTP-dependent ribosomal translocation step during translation elongation. During this step, the ribosome changes from the pre-translocational (PRE) to the post-translocational (POST) state as the newly formed A-site-bound peptidyl-tRNA and P-site-bound deacylated tRNA move to the P and E sites, respectively. Catalyzes the coordinated movement of the two tRNA molecules, the mRNA and conformational changes in the ribosome. This Corynebacterium jeikeium (strain K411) protein is Elongation factor G.